Reading from the N-terminus, the 110-residue chain is Small ribosomal subunit protein bS18c (110 aa).

The protein belongs to the bacterial ribosomal protein bS18 family. Part of the 30S ribosomal subunit.

The protein localises to the plastid. It localises to the chloroplast. In Pisum sativum (Garden pea), this protein is Small ribosomal subunit protein bS18c (rps18).